The primary structure comprises 411 residues: Translation initiation factor 2 subunit gamma (411 aa).

The tr-type G domain maps to 9–201 (QPTVNIGMVG…AIEKYIPTPE (193 aa)). The segment at 18-25 (GHVDHGKS) is G1. Residues D21, S25, G46, and S48 each coordinate Mg(2+). 21 to 26 (DHGKST) is a GTP binding site. The interval 46-50 (GISIK) is G2. A G3 region spans residues 88–91 (DAPG). Residues 144–147 (NKID) and 179–181 (SAY) contribute to the GTP site. The G4 stretch occupies residues 144 to 147 (NKID). The tract at residues 179 to 181 (SAY) is G5.

The protein belongs to the TRAFAC class translation factor GTPase superfamily. Classic translation factor GTPase family. EIF2G subfamily. In terms of assembly, heterotrimer composed of an alpha, a beta and a gamma chain. Mg(2+) serves as cofactor.

The catalysed reaction is GTP + H2O = GDP + phosphate + H(+). In terms of biological role, eIF-2 functions in the early steps of protein synthesis by forming a ternary complex with GTP and initiator tRNA. The sequence is that of Translation initiation factor 2 subunit gamma from Thermoplasma volcanium (strain ATCC 51530 / DSM 4299 / JCM 9571 / NBRC 15438 / GSS1).